We begin with the raw amino-acid sequence, 179 residues long: Ferric nitrobindin-like protein (179 aa).

Positions 17-23 (GRWEGLG) match the GXWXGXG motif.

The protein belongs to the nitrobindin family.

The chain is Ferric nitrobindin-like protein from Thermobifida fusca (strain YX).